A 190-amino-acid polypeptide reads, in one-letter code: Threonylcarbamoyl-AMP synthase (190 aa).

The YrdC-like domain maps to 8–190 (RFRIRQCAAR…DAESGAVIRA (183 aa)).

It belongs to the SUA5 family. TsaC subfamily.

It is found in the cytoplasm. It catalyses the reaction L-threonine + hydrogencarbonate + ATP = L-threonylcarbamoyladenylate + diphosphate + H2O. In terms of biological role, required for the formation of a threonylcarbamoyl group on adenosine at position 37 (t(6)A37) in tRNAs that read codons beginning with adenine. Catalyzes the conversion of L-threonine, HCO(3)(-)/CO(2) and ATP to give threonylcarbamoyl-AMP (TC-AMP) as the acyladenylate intermediate, with the release of diphosphate. In Alkalilimnicola ehrlichii (strain ATCC BAA-1101 / DSM 17681 / MLHE-1), this protein is Threonylcarbamoyl-AMP synthase.